The sequence spans 485 residues: Adenosylhomocysteinase (485 aa).

Positions 60, 146, and 208 each coordinate substrate. Residue 209-211 (TTT) participates in NAD(+) binding. Positions 238 and 242 each coordinate substrate. NAD(+) is bound by residues N243, 272-277 (GYGDVG), E295, N330, 351-353 (IGH), and N399.

It belongs to the adenosylhomocysteinase family. Requires NAD(+) as cofactor.

It is found in the cytoplasm. It carries out the reaction S-adenosyl-L-homocysteine + H2O = L-homocysteine + adenosine. It participates in amino-acid biosynthesis; L-homocysteine biosynthesis; L-homocysteine from S-adenosyl-L-homocysteine: step 1/1. Its function is as follows. May play a key role in the regulation of the intracellular concentration of adenosylhomocysteine. The chain is Adenosylhomocysteinase from Streptomyces avermitilis (strain ATCC 31267 / DSM 46492 / JCM 5070 / NBRC 14893 / NCIMB 12804 / NRRL 8165 / MA-4680).